The sequence spans 269 residues: Phosphoribosylformylglycinamidine synthase subunit PurQ (269 aa).

The Glutamine amidotransferase type-1 domain occupies 5 to 262 (VLVMSGYGIN…IESNLQIFKN (258 aa)). Residue Cys95 is the Nucleophile of the active site. Residues His222, Glu224, and Glu232 contribute to the active site.

As to quaternary structure, part of the FGAM synthase complex composed of 1 PurL, 1 PurQ and 2 PurS subunits.

The protein localises to the cytoplasm. It carries out the reaction N(2)-formyl-N(1)-(5-phospho-beta-D-ribosyl)glycinamide + L-glutamine + ATP + H2O = 2-formamido-N(1)-(5-O-phospho-beta-D-ribosyl)acetamidine + L-glutamate + ADP + phosphate + H(+). It catalyses the reaction L-glutamine + H2O = L-glutamate + NH4(+). It participates in purine metabolism; IMP biosynthesis via de novo pathway; 5-amino-1-(5-phospho-D-ribosyl)imidazole from N(2)-formyl-N(1)-(5-phospho-D-ribosyl)glycinamide: step 1/2. Functionally, part of the phosphoribosylformylglycinamidine synthase complex involved in the purines biosynthetic pathway. Catalyzes the ATP-dependent conversion of formylglycinamide ribonucleotide (FGAR) and glutamine to yield formylglycinamidine ribonucleotide (FGAM) and glutamate. The FGAM synthase complex is composed of three subunits. PurQ produces an ammonia molecule by converting glutamine to glutamate. PurL transfers the ammonia molecule to FGAR to form FGAM in an ATP-dependent manner. PurS interacts with PurQ and PurL and is thought to assist in the transfer of the ammonia molecule from PurQ to PurL. The chain is Phosphoribosylformylglycinamidine synthase subunit PurQ from Methanococcus maripaludis (strain C5 / ATCC BAA-1333).